Consider the following 263-residue polypeptide: 4-hydroxy-2-oxo-heptane-1,7-dioate aldolase (263 aa).

Histidine 45 serves as the catalytic Proton acceptor. Glutamine 147 is a binding site for substrate. Glutamate 149 is an a divalent metal cation binding site. Alanine 174 and aspartate 175 together coordinate substrate. Aspartate 175 contacts a divalent metal cation.

The protein belongs to the HpcH/HpaI aldolase family. In terms of assembly, homohexamer; trimer of dimers. The cofactor is a divalent metal cation.

The catalysed reaction is 4-hydroxy-2-oxoheptanedioate = succinate semialdehyde + pyruvate. The protein operates within aromatic compound metabolism; 4-hydroxyphenylacetate degradation; pyruvate and succinate semialdehyde from 4-hydroxyphenylacetate: step 7/7. Functionally, catalyzes the reversible retro-aldol cleavage of 4-hydroxy-2-ketoheptane-1,7-dioate (HKHD) to pyruvate and succinic semialdehyde. In Salmonella choleraesuis (strain SC-B67), this protein is 4-hydroxy-2-oxo-heptane-1,7-dioate aldolase.